The chain runs to 724 residues: Catalase-peroxidase (724 aa).

The segment at residues 98-226 is a cross-link (tryptophyl-tyrosyl-methioninium (Trp-Tyr) (with M-252)); it reads WHAAGTYRIA…LAAVMMGLIY (129 aa). His99 acts as the Proton acceptor in catalysis. The tryptophyl-tyrosyl-methioninium (Tyr-Met) (with W-98) cross-link spans 226-252; it reads YVNPEGVDGNPDPLKTAHDIRVTFERM. His267 is a heme b binding site.

This sequence belongs to the peroxidase family. Peroxidase/catalase subfamily. Homodimer or homotetramer. Heme b is required as a cofactor. In terms of processing, formation of the three residue Trp-Tyr-Met cross-link is important for the catalase, but not the peroxidase activity of the enzyme.

It catalyses the reaction H2O2 + AH2 = A + 2 H2O. The enzyme catalyses 2 H2O2 = O2 + 2 H2O. Bifunctional enzyme with both catalase and broad-spectrum peroxidase activity. The polypeptide is Catalase-peroxidase (Psychromonas ingrahamii (strain DSM 17664 / CCUG 51855 / 37)).